A 411-amino-acid chain; its full sequence is Protein Rv3035 (411 aa).

The sequence is that of Protein Rv3035 from Mycobacterium tuberculosis (strain ATCC 25618 / H37Rv).